A 237-amino-acid chain; its full sequence is MESYSQNSNKLDFQHEARILNGIWLITALGLVATAGLAWGAKYIEITATKYDSPPMYVAIGLLLLCMYGLSKDINKINAAIAGVIYLFLLSLVAIVVASLVPVYAIIIVFSTAGAMFLISMLAGLLFNVDPGSHRFIIMMTLTGLALVIIVNAALMSERPIWIISCLMIVLWSGIISHGRNKLLELAGKCHSEELWSPVRCAFTGALTLYYYFIGFFGILAAIAITLVWQRHTRFFH.

7 consecutive transmembrane segments (helical) span residues 19–39 (ILNGIWLITALGLVATAGLAW), 51–71 (YDSPPMYVAIGLLLLCMYGLS), 81–101 (IAGVIYLFLLSLVAIVVASLV), 106–126 (IIIVFSTAGAMFLISMLAGLL), 136–156 (FIIMMTLTGLALVIIVNAALM), 159–179 (RPIWIISCLMIVLWSGIISHG), and 209–229 (LYYYFIGFFGILAAIAITLVW).

Its subcellular location is the cell membrane. This is an uncharacterized protein from Escherichia coli (strain K12).